Consider the following 471-residue polypeptide: ATP synthase subunit beta (471 aa).

157–164 (GGAGVGKT) is an ATP binding site.

It belongs to the ATPase alpha/beta chains family. F-type ATPases have 2 components, CF(1) - the catalytic core - and CF(0) - the membrane proton channel. CF(1) has five subunits: alpha(3), beta(3), gamma(1), delta(1), epsilon(1). CF(0) has three main subunits: a(1), b(2) and c(9-12). The alpha and beta chains form an alternating ring which encloses part of the gamma chain. CF(1) is attached to CF(0) by a central stalk formed by the gamma and epsilon chains, while a peripheral stalk is formed by the delta and b chains.

The protein resides in the cell inner membrane. It carries out the reaction ATP + H2O + 4 H(+)(in) = ADP + phosphate + 5 H(+)(out). Its function is as follows. Produces ATP from ADP in the presence of a proton gradient across the membrane. The catalytic sites are hosted primarily by the beta subunits. The polypeptide is ATP synthase subunit beta (Trichlorobacter lovleyi (strain ATCC BAA-1151 / DSM 17278 / SZ) (Geobacter lovleyi)).